A 714-amino-acid polypeptide reads, in one-letter code: Transcription activator of gluconeogenesis UREG_00958 (714 aa).

The tract at residues 1–71 is disordered; the sequence is MTSNARNGPL…NAKDPLRPRR (71 aa). Residues 38-62 are compositionally biased toward polar residues; sequence ESQTQVENSSTKQPNGQTKPMSASN. Positions 78–106 form a DNA-binding region, zn(2)-C6 fungal-type; the sequence is CFACQRAHLTCGDERPCQRCIKRGIQNSC. Disordered regions lie at residues 176–228, 274–312, and 539–567; these read SLSQ…NASG, GAGD…TAQP, and NTGG…VNPS. Polar residues predominate over residues 191–228; that stretch reads FPSQSPVSPTFSITANSATSGNQNMPSSLPASNGNASG. The segment covering 545–555 has biased composition (low complexity); that stretch reads GSTSGTSSRGS.

This sequence belongs to the ERT1/acuK family.

It localises to the nucleus. Transcription factor which regulates nonfermentable carbon utilization. Activator of gluconeogenetic genes. This is Transcription activator of gluconeogenesis UREG_00958 from Uncinocarpus reesii (strain UAMH 1704).